The sequence spans 411 residues: MKNTTKPCRTEHHNAEGQRDRMEGNKKGETKAKKSVACSHCKKRFSHKAHLQIHMRVHTGEKPYRCDQCGKCFPYKQSLKLHLDIHAKGNPYTCDECGESFKTRLQLRSHMTLHPKYKPYKCDQCEKSYGREDHLQRHMKLHTGEKPHKCEHCGKSFPMRDLLRSHLMVHSEVKPYTCDQCGKGFTLKKSYNEHMNIHTGERPYTCDQCGKGFPYEQSLNLHMRFHREEKPFTCDQCGQSFSQKGAYNIHMKIHTGEKPYTCDQCGMSFRHGYSLKLHMTHHTGEKPFHCDQCDKCYSTALFLKNHIKTHDKAQIYSCLTCGKTFNQLRGLRLHEKRHSLTKPFMCFDCGKCYFTDTELKQHLPVHSNERPYMCSLCFKSFPRMGSLIVHEKTHNGEKPDCRTGSKKSQDE.

The tract at residues 1–33 is disordered; the sequence is MKNTTKPCRTEHHNAEGQRDRMEGNKKGETKAK. The span at 8 to 32 shows a compositional bias: basic and acidic residues; the sequence is CRTEHHNAEGQRDRMEGNKKGETKA. 13 C2H2-type zinc fingers span residues 36–58, 64–86, 92–114, 120–142, 148–170, 176–198, 204–226, 232–254, 260–282, 288–310, 316–338, 344–366, and 372–394; these read VACS…MRVH, YRCD…LDIH, YTCD…MTLH, YKCD…MKLH, HKCE…LMVH, YTCD…MNIH, YTCD…MRFH, FTCD…MKIH, YTCD…MTHH, FHCD…IKTH, YSCL…EKRH, FMCF…LPVH, and YMCS…EKTH.

Specifically expressed in the hematopoietic lineage during embryogenesis; first expressed at the late blastula stage around the blastoderm margin. During gastrulation, restricted to the ventral mesoderm, the presumptive prechordal plate and the dorso-marginal cells of the organizer. At the 3-somite stage, strongly expressed in a caudal domain (marking the erythroid lineage) and a cephalic domain of the lateral mesoderm. At the 8- to 10-somite stage, caudal expression is in two bands of lateral mesoderm which later converge at the midline. Anterior expression is also in two bands of lateral mesoderm which converge as two patches at the midline by the 15-somite stage, with increased scattering of single cells (macrophage precursors) away from the midline to the yolksac. Once at the yolksac, expression is lost. By 20-24 hours post-fertilization (hpf), expressed in proerythroblasts in the erythroid blood island centered above the uro-genital opening. Expression persists in circulating erythroblasts but is lost in mature erythrocytes.

The protein is Zinc finger protein draculin of Danio rerio (Zebrafish).